We begin with the raw amino-acid sequence, 114 residues long: MQKDSGPLMPLHYFGFGYAALVATGGIIGYAKAGSVPSLAAGLFFGGLAGLGAYQLSQDPRNVWVFLATSGTLAGIMGMRFYNSGKFMPAGLIAGASLLMVAKVGISLLSSPHP.

A run of 4 helical transmembrane segments spans residues 8–28, 33–53, 63–83, and 89–109; these read LMPLHYFGFGYAALVATGGII, AGSVPSLAAGLFFGGLAGLGA, VWVFLATSGTLAGIMGMRFYN, and PAGLIAGASLLMVAKVGISLL.

It belongs to the TMEM14 family.

The protein resides in the mitochondrion membrane. Functionally, required for normal heme biosynthesis. The polypeptide is Transmembrane protein 14C (Tmem14c) (Mus musculus (Mouse)).